The following is a 177-amino-acid chain: NADH-quinone oxidoreductase subunit B (177 aa).

The [4Fe-4S] cluster site is built by Cys-56, Cys-57, Cys-121, and Cys-151.

The protein belongs to the complex I 20 kDa subunit family. As to quaternary structure, NDH-1 is composed of 14 different subunits. Subunits NuoB, C, D, E, F, and G constitute the peripheral sector of the complex. [4Fe-4S] cluster serves as cofactor.

It is found in the cell inner membrane. It catalyses the reaction a quinone + NADH + 5 H(+)(in) = a quinol + NAD(+) + 4 H(+)(out). Functionally, NDH-1 shuttles electrons from NADH, via FMN and iron-sulfur (Fe-S) centers, to quinones in the respiratory chain. The immediate electron acceptor for the enzyme in this species is believed to be ubiquinone. Couples the redox reaction to proton translocation (for every two electrons transferred, four hydrogen ions are translocated across the cytoplasmic membrane), and thus conserves the redox energy in a proton gradient. The chain is NADH-quinone oxidoreductase subunit B from Rhodobacter capsulatus (Rhodopseudomonas capsulata).